Reading from the N-terminus, the 82-residue chain is Omega-conotoxin-like 9 (82 aa).

Positions 1–22 (MKLTCMMIAAVLFLTTWTFVTA) are cleaved as a signal peptide. Positions 23 to 51 (DDSRYGLKNLFPKARHEMKNPEASKLNKR) are excised as a propeptide. Cystine bridges form between cysteine 54–cysteine 69, cysteine 61–cysteine 73, and cysteine 68–cysteine 77.

Belongs to the conotoxin O1 superfamily. As to expression, expressed by the venom duct.

The protein resides in the secreted. Functionally, omega-conotoxins act at presynaptic membranes, they bind and block voltage-gated calcium channels (Cav). The chain is Omega-conotoxin-like 9 from Conus striatus (Striated cone).